The chain runs to 147 residues: Holo-[acyl-carrier-protein] synthase (147 aa).

Positions 7 and 60 each coordinate Mg(2+).

The protein belongs to the P-Pant transferase superfamily. AcpS family. The cofactor is Mg(2+).

The protein resides in the cytoplasm. It catalyses the reaction apo-[ACP] + CoA = holo-[ACP] + adenosine 3',5'-bisphosphate + H(+). Its function is as follows. Transfers the 4'-phosphopantetheine moiety from coenzyme A to a Ser of acyl-carrier-protein. In Bifidobacterium animalis subsp. lactis (strain AD011), this protein is Holo-[acyl-carrier-protein] synthase.